Here is a 565-residue protein sequence, read N- to C-terminus: MKDSREKLIKRFLCAKTNTKIVNQENKLYYFFLHEDLYPIIFQNTDSSFGKFSSVFRKTNIKKNHRESFLTIKSCIFLFRSNNFSGRKRSFFSNTRFHDQKKKENFLPLPKKVIFSLFFESITFILLCNQKKSDFEKQFFQTKDLSISIQKPLASLERQWQYDSFGFQGCFSYFFHPEVVLRILRKKFQDISFLHLLRKFLHLNVYLSNNTVKEVPTNNIRTILWNIYFLEIDSFFVSICKNYCISDEINNVSSNYSLSCFEKIQEWTYFVEKQEYKDFFEKKLYPYEIFDTITIRNSEERRLEQSIKRQISFLDQSKIYKYFRTNTNWFIFFQKQKPENILLKRWIILFFIRRLGYILQENTINWTLTFSEYQNELSAYFFLAYILQFPKKKNFVKINTKLFFLVHYFVRRVISFLNPLYLIILLLSKQNFCNSFGYPKSKSGWVTWTDTDIIQNFTRLQNNLFFFYSGCTNTKALARIHYILHFSCVKTLACKHKTNLRYIYKKFGTNLTRKDFTTKIFVTNQSKNFRLRSLWKNQKMTRVWNFRLTQLNSLIFHLETFYRLR.

Belongs to the intron maturase 2 family. MatK subfamily.

It localises to the plastid. The protein resides in the chloroplast. Usually encoded in the trnK tRNA gene intron. Probably assists in splicing its own and other chloroplast group II introns. This is Maturase K from Staurastrum punctulatum (Green alga).